A 254-amino-acid polypeptide reads, in one-letter code: uncharacterized protein (254 aa).

Transmembrane regions (helical) follow at residues 41–61, 64–84, 91–111, 125–145, 146–166, 172–192, 204–224, and 232–252; these read VFVF…IKII, IFQA…EYFF, IYCG…LYIL, ILIG…FVLA, PAAL…LWSF, FILL…IQLL, MLLA…VLTP, and IIMS…LFLL.

This sequence belongs to the TatC family.

Its subcellular location is the plastid. The protein resides in the chloroplast membrane. This is an uncharacterized protein from Porphyra purpurea (Red seaweed).